Reading from the N-terminus, the 247-residue chain is 2,3-bisphosphoglycerate-dependent phosphoglycerate mutase (247 aa).

Substrate-binding positions include 8-15 (RHGESTWN), 21-22 (TG), Arg-60, 87-90 (ERHY), Lys-98, 114-115 (RR), and 183-184 (GN). His-9 acts as the Tele-phosphohistidine intermediate in catalysis. Glu-87 serves as the catalytic Proton donor/acceptor.

Belongs to the phosphoglycerate mutase family. BPG-dependent PGAM subfamily. Homodimer.

The enzyme catalyses (2R)-2-phosphoglycerate = (2R)-3-phosphoglycerate. The protein operates within carbohydrate degradation; glycolysis; pyruvate from D-glyceraldehyde 3-phosphate: step 3/5. In terms of biological role, catalyzes the interconversion of 2-phosphoglycerate and 3-phosphoglycerate. The sequence is that of 2,3-bisphosphoglycerate-dependent phosphoglycerate mutase from Acidovorax sp. (strain JS42).